A 559-amino-acid polypeptide reads, in one-letter code: POU domain protein 1 (559 aa).

In terms of domain architecture, POU-specific spans 259–333 (EDLPSSDDLE…LLQKWLHEAD (75 aa)). The segment at residues 351–410 (KRKKRTSIEANVKSILESSFMKLSKPSAQDISSLAEKLSLEKEVVRVWFCNRRQKEKRIT) is a DNA-binding region (homeobox).

Belongs to the POU transcription factor family.

The protein localises to the nucleus. The chain is POU domain protein 1 (POU1) from Dugesia japonica (Planarian).